Reading from the N-terminus, the 388-residue chain is Protein RecA (388 aa).

79-86 (GPESSGKT) contacts ATP. Residues 347-388 (IDGEEVSEQDTENKKDEPKKEEAVNEEVPLDLGDELEIEIEE) are disordered. The span at 357–369 (TENKKDEPKKEEA) shows a compositional bias: basic and acidic residues. Positions 370–388 (VNEEVPLDLGDELEIEIEE) are enriched in acidic residues.

It belongs to the RecA family.

Its subcellular location is the cytoplasm. Its function is as follows. Can catalyze the hydrolysis of ATP in the presence of single-stranded DNA, the ATP-dependent uptake of single-stranded DNA by duplex DNA, and the ATP-dependent hybridization of homologous single-stranded DNAs. It interacts with LexA causing its activation and leading to its autocatalytic cleavage. The protein is Protein RecA of Streptococcus pneumoniae (strain Hungary19A-6).